Consider the following 880-residue polypeptide: Protein translocase subunit SecA (880 aa).

ATP is bound by residues Q87, 105-109, and D501; that span reads GEGKT. Residues C864, C866, C875, and H876 each coordinate Zn(2+).

The protein belongs to the SecA family. Monomer and homodimer. Part of the essential Sec protein translocation apparatus which comprises SecA, SecYEG and auxiliary proteins SecDF-YajC and YidC. Requires Zn(2+) as cofactor.

Its subcellular location is the cell inner membrane. It is found in the cytoplasm. The enzyme catalyses ATP + H2O + cellular proteinSide 1 = ADP + phosphate + cellular proteinSide 2.. Functionally, part of the Sec protein translocase complex. Interacts with the SecYEG preprotein conducting channel. Has a central role in coupling the hydrolysis of ATP to the transfer of proteins into and across the cell membrane, serving both as a receptor for the preprotein-SecB complex and as an ATP-driven molecular motor driving the stepwise translocation of polypeptide chains across the membrane. In Orientia tsutsugamushi (strain Boryong) (Rickettsia tsutsugamushi), this protein is Protein translocase subunit SecA.